A 121-amino-acid polypeptide reads, in one-letter code: Insulin-like peptide 01 (121 aa).

Positions Met-1–Ser-24 are cleaved as a signal peptide. Residues Asn-25–Met-45 constitute a propeptide that is removed on maturation. 3 disulfides stabilise this stretch: Cys-52/Cys-107, Cys-64/Cys-120, and Cys-106/Cys-111. A propeptide spans Arg-69–Arg-97 (c peptide).

The protein belongs to the insulin family.

It localises to the secreted. Its function is as follows. Insulin decreases blood glucose concentration. May have evolved to activate insulin receptors (INSR) in vertebrates. Molecular docking studies reveals unique interaction with the human insulin receptor. In vivo, insulin-like peptide injection reduces blood glucose levels in two models of zebrafish diabetes (streptozotocin- and glucose-induced). Also shorter swimming distance of zebrafish larvae, an effect which is not observed with human insulin. The protein is Insulin-like peptide 01 of Exaiptasia diaphana (Tropical sea anemone).